The primary structure comprises 1316 residues: DNA-directed RNA polymerase subunit beta' (1316 aa).

The Zn(2+) site is built by C60, C62, C75, and C78. Mg(2+)-binding residues include D535, D537, and D539. Zn(2+) contacts are provided by C891, C968, C975, and C978.

The protein belongs to the RNA polymerase beta' chain family. As to quaternary structure, the RNAP catalytic core consists of 2 alpha, 1 beta, 1 beta' and 1 omega subunit. When a sigma factor is associated with the core the holoenzyme is formed, which can initiate transcription. Requires Mg(2+) as cofactor. The cofactor is Zn(2+).

The catalysed reaction is RNA(n) + a ribonucleoside 5'-triphosphate = RNA(n+1) + diphosphate. Functionally, DNA-dependent RNA polymerase catalyzes the transcription of DNA into RNA using the four ribonucleoside triphosphates as substrates. This is DNA-directed RNA polymerase subunit beta' from Mycobacterium bovis (strain BCG / Tokyo 172 / ATCC 35737 / TMC 1019).